Reading from the N-terminus, the 462-residue chain is Cysteine--tRNA ligase (462 aa).

C28 lines the Zn(2+) pocket. The short motif at 30–40 is the 'HIGH' region element; the sequence is VTIYDLCHIGH. Residues C211, H236, and E240 each coordinate Zn(2+). Positions 268 to 272 match the 'KMSKS' region motif; that stretch reads KMSKS. K271 is a binding site for ATP.

It belongs to the class-I aminoacyl-tRNA synthetase family. In terms of assembly, monomer. Zn(2+) is required as a cofactor.

It is found in the cytoplasm. It catalyses the reaction tRNA(Cys) + L-cysteine + ATP = L-cysteinyl-tRNA(Cys) + AMP + diphosphate. The sequence is that of Cysteine--tRNA ligase from Aliivibrio salmonicida (strain LFI1238) (Vibrio salmonicida (strain LFI1238)).